The sequence spans 135 residues: Small ribosomal subunit protein bS16 (135 aa).

Basic and acidic residues predominate over residues 105-120 (DEKKKPVLKPKTEKAA). Residues 105-135 (DEKKKPVLKPKTEKAAPEAAAPEAEATEEQA) are disordered.

This sequence belongs to the bacterial ribosomal protein bS16 family.

This chain is Small ribosomal subunit protein bS16, found in Clavibacter sepedonicus (Clavibacter michiganensis subsp. sepedonicus).